The following is a 948-amino-acid chain: FRIGIDA-like protein 5 (948 aa).

Residues 47–164 adopt a coiled-coil conformation; the sequence is DSTRSVLEER…VEKHRERIVA (118 aa). Disordered stretches follow at residues 447–500, 518–538, and 804–894; these read ESAQ…APSQ, VKES…SGTE, and RNTS…YPSH. Composition is skewed to basic and acidic residues over residues 459 to 475 and 518 to 527; these read SYEK…KSEA and VKESGADHQP. A compositionally biased stretch (low complexity) spans 807 to 817; that stretch reads SNGSGSGSASS. Residues 818–830 show a composition bias toward polar residues; that stretch reads KPDSTIKQSQTAK. The span at 861–872 shows a compositional bias: basic residues; that stretch reads FSKKNKRGKKRS. Residues 873–894 show a composition bias toward polar residues; the sequence is MSGNNQSSGHIASHTSNHYPSH.

The protein belongs to the Frigida family. Expressed at low levels during seed development.

In Arabidopsis thaliana (Mouse-ear cress), this protein is FRIGIDA-like protein 5 (FRL5).